A 904-amino-acid chain; its full sequence is MVEQEGLTAKEIDYAFQQNENLGSKETSFLIPEDLQSPPEKRFNLFLRRRLMFQRSEHSKDSVFFRDGIRQIDFVLSYVEDLKKDGELKAERRREFEQNLRKTGLDLETEDKLNSEDGKTYFVKIHAPWEVLVTYAEVLGIKMPIKLSDIPRPKYPPLSYMLGAVKLPSSVKYPTPEYFTAQFSRHRQELFLIEDEATFFPSSTRNRIVYYILSRCPFGVEEGKKKIGIERLLNSNTYLSAYPLHDGQYWKPSKTTRPNERYNLCKNWARFSYFYKEQPFHLIRNYFGEKIGIYFVFLGYYTEMLLFAALVGLACFIYGLLSMENNRTSTEICDPDIGGQMIMCPLCDEVCDYWRLNTTCLHSKFSHLFDNESTVFFALFMGIWVTLFLEFWKQRQARLEYEWDLVDFEEEQQQLQLRPEFEAMCKHKKMNPVTKEMEPHMPLCHRIPWYFVSGTTVTFGMALLLSSMVSILIYRLSVFATFASFMESEATLQSVKSFFTPQLATALSGSCLNCIVILILNFFYEKISAWITKMEIPRTHQEYESSLTLKMFLFQFVNYYSSCFYVAFFKGKFVGYPGSYTYMFNIWRSEECGPAGCLIELTTQLTIIMIGKQIFGNIHEAFQPLIFNWWRRRRARTHSEKLYSRWEQDHDLQVYGHRGLFYEYLETVIQFGFATLFVASFPLAPLFALMNNIMGIRVDAWKLTTQYRRPVAAKAHSIGVWQDILFGMAIVSVATNAFIVSFTSDIIPRLVYFYAYSTNSTEPLSGYVNNSLSVFLIADFPNHTVPMEKKDFVTCRYRDYRYPPDHEDKYSHNMQFWHVLAAKMTFIIVMEHVVFLFKFLLAWLIPDVPKDVVEKIKREKLMTIKIIHDFELNKLKENLDVEYGNIMKNVLVDEDNSLKAKTTV.

Over 1–290 the chain is Cytoplasmic; that stretch reads MVEQEGLTAK…HLIRNYFGEK (290 aa). The helical transmembrane segment at 291–311 threads the bilayer; sequence IGIYFVFLGYYTEMLLFAALV. Residues 312-371 lie on the Extracellular side of the membrane; that stretch reads GLACFIYGLLSMENNRTSTEICDPDIGGQMIMCPLCDEVCDYWRLNTTCLHSKFSHLFDN. N-linked (GlcNAc...) asparagine glycosylation is found at N326, N357, and N371. The helical transmembrane segment at 372-392 threads the bilayer; that stretch reads ESTVFFALFMGIWVTLFLEFW. The Cytoplasmic segment spans residues 393–453; the sequence is KQRQARLEYE…CHRIPWYFVS (61 aa). A helical membrane pass occupies residues 454 to 474; it reads GTTVTFGMALLLSSMVSILIY. The Extracellular segment spans residues 475-502; it reads RLSVFATFASFMESEATLQSVKSFFTPQ. The chain crosses the membrane as a helical span at residues 503–523; sequence LATALSGSCLNCIVILILNFF. The Cytoplasmic segment spans residues 524–548; that stretch reads YEKISAWITKMEIPRTHQEYESSLT. The chain crosses the membrane as a helical span at residues 549-569; the sequence is LKMFLFQFVNYYSSCFYVAFF. The Extracellular portion of the chain corresponds to 570-667; it reads KGKFVGYPGS…RGLFYEYLET (98 aa). The helical transmembrane segment at 668-688 threads the bilayer; sequence VIQFGFATLFVASFPLAPLFA. Residues 689 to 723 lie on the Cytoplasmic side of the membrane; that stretch reads LMNNIMGIRVDAWKLTTQYRRPVAAKAHSIGVWQD. Residues 724 to 744 form a helical membrane-spanning segment; that stretch reads ILFGMAIVSVATNAFIVSFTS. The Extracellular portion of the chain corresponds to 745–825; the sequence is DIIPRLVYFY…FWHVLAAKMT (81 aa). Residues N759, N769, and N782 are each glycosylated (N-linked (GlcNAc...) asparagine). A helical membrane pass occupies residues 826-846; the sequence is FIIVMEHVVFLFKFLLAWLIP. Topologically, residues 847-904 are cytoplasmic; it reads DVPKDVVEKIKREKLMTIKIIHDFELNKLKENLDVEYGNIMKNVLVDEDNSLKAKTTV.

Belongs to the anoctamin family. In terms of tissue distribution, highly expressed in skeletal muscle, bone tissues and thyroid gland.

It is found in the endoplasmic reticulum membrane. It localises to the cell membrane. Functionally, plays a role in plasma membrane repair in a process involving annexins. Does not exhibit calcium-activated chloride channel (CaCC) activity. The polypeptide is Anoctamin-5 (Ano5) (Mus musculus (Mouse)).